The following is a 516-amino-acid chain: GMP synthase [glutamine-hydrolyzing] (516 aa).

Residues 10–201 enclose the Glutamine amidotransferase type-1 domain; it reads KIIVLDFGSQ…AFDVCGAVAN (192 aa). Catalysis depends on Cys-87, which acts as the Nucleophile. Catalysis depends on residues His-175 and Glu-177. One can recognise a GMPS ATP-PPase domain in the interval 202–391; sequence WTMADFIDMQ…LGIPHDLVWR (190 aa). ATP is bound at residue 229-235; it reads SGGVDSS.

As to quaternary structure, homodimer.

The catalysed reaction is XMP + L-glutamine + ATP + H2O = GMP + L-glutamate + AMP + diphosphate + 2 H(+). Its pathway is purine metabolism; GMP biosynthesis; GMP from XMP (L-Gln route): step 1/1. In terms of biological role, catalyzes the synthesis of GMP from XMP. In Lactobacillus acidophilus (strain ATCC 700396 / NCK56 / N2 / NCFM), this protein is GMP synthase [glutamine-hydrolyzing].